The following is a 252-amino-acid chain: Phosphomannomutase (252 aa).

The active-site Nucleophile is the Asp13. Positions 13 and 15 each coordinate Mg(2+). Asp15 acts as the Proton donor/acceptor in catalysis. Alpha-D-mannose 1-phosphate is bound by residues Arg22, Arg124, Arg135, Arg142, Ser180, and Asp182. Mg(2+) is bound by residues Asp208, Tyr220, and Thr225.

The protein belongs to the eukaryotic PMM family. As to quaternary structure, homodimer. It depends on Mg(2+) as a cofactor. As to expression, expressed in roots, stems, leaves, flowers and immature fruits.

The protein localises to the cytoplasm. The catalysed reaction is alpha-D-mannose 1-phosphate = D-mannose 6-phosphate. Its pathway is nucleotide-sugar biosynthesis; GDP-alpha-D-mannose biosynthesis; alpha-D-mannose 1-phosphate from D-fructose 6-phosphate: step 2/2. In terms of biological role, catalyzes the interconversion of mannose-6-phosphate to mannose-1-phosphate, the precursor for the synthesis of GDP-mannose. GDP-mannose is an essential sugar nucleotide for the synthesis of D-mannose-containing cell wall polysaccharides (galactomannans and glucomannans), glycolipids, glycoproteins and the antioxidant L-ascorbate. Can complement the yeast temperature-sensitive mutant sec53-6. The sequence is that of Phosphomannomutase from Nicotiana benthamiana.